Here is a 406-residue protein sequence, read N- to C-terminus: Formate-dependent phosphoribosylglycinamide formyltransferase (406 aa).

Residues 27 to 28 (EL) and Glu87 contribute to the N(1)-(5-phospho-beta-D-ribosyl)glycinamide site. ATP contacts are provided by residues Arg120, Lys162, 167 to 172 (SSGKGQ), 202 to 205 (EGFI), and Glu210. The ATP-grasp domain maps to 125–320 (RLAAETLGLP…EFELHARALL (196 aa)). Mg(2+) contacts are provided by Glu279 and Glu291. Residues Asp298, Lys367, and 374–375 (RR) each bind N(1)-(5-phospho-beta-D-ribosyl)glycinamide.

It belongs to the PurK/PurT family. In terms of assembly, homodimer.

It catalyses the reaction N(1)-(5-phospho-beta-D-ribosyl)glycinamide + formate + ATP = N(2)-formyl-N(1)-(5-phospho-beta-D-ribosyl)glycinamide + ADP + phosphate + H(+). It functions in the pathway purine metabolism; IMP biosynthesis via de novo pathway; N(2)-formyl-N(1)-(5-phospho-D-ribosyl)glycinamide from N(1)-(5-phospho-D-ribosyl)glycinamide (formate route): step 1/1. Involved in the de novo purine biosynthesis. Catalyzes the transfer of formate to 5-phospho-ribosyl-glycinamide (GAR), producing 5-phospho-ribosyl-N-formylglycinamide (FGAR). Formate is provided by PurU via hydrolysis of 10-formyl-tetrahydrofolate. The polypeptide is Formate-dependent phosphoribosylglycinamide formyltransferase (Bordetella parapertussis (strain 12822 / ATCC BAA-587 / NCTC 13253)).